We begin with the raw amino-acid sequence, 353 residues long: Glutamine synthetase nodule isozyme (353 aa).

Residues 19 to 99 (IIAEYIWVGG…VMCDTYTPAG (81 aa)) form the GS beta-grasp domain. The GS catalytic domain occupies 106–353 (KRHAAAKIFS…TSMIAETTLL (248 aa)).

The protein belongs to the glutamine synthetase family. In terms of assembly, homooctamer.

The protein localises to the cytoplasm. It catalyses the reaction L-glutamate + NH4(+) + ATP = L-glutamine + ADP + phosphate + H(+). The chain is Glutamine synthetase nodule isozyme from Lupinus luteus (European yellow lupine).